The chain runs to 242 residues: Probable transcriptional regulatory protein Dred_1658 (242 aa).

The protein belongs to the TACO1 family.

It localises to the cytoplasm. This Desulforamulus reducens (strain ATCC BAA-1160 / DSM 100696 / MI-1) (Desulfotomaculum reducens) protein is Probable transcriptional regulatory protein Dred_1658.